We begin with the raw amino-acid sequence, 77 residues long: uncharacterized protein (77 aa).

The chain crosses the membrane as a helical span at residues Leu-49–Met-71.

Its subcellular location is the membrane. This is an uncharacterized protein from Archaeoglobus fulgidus (strain ATCC 49558 / DSM 4304 / JCM 9628 / NBRC 100126 / VC-16).